Here is a 35-residue protein sequence, read N- to C-terminus: Mu-theraphotoxin-Hhn1a (35 aa).

Cystine bridges form between Cys2/Cys17, Cys9/Cys24, and Cys16/Cys31.

Belongs to the neurotoxin 10 (Hwtx-1) family. 22 (Htx-4) subfamily. As to quaternary structure, monomer. In terms of tissue distribution, expressed by the venom gland.

The protein resides in the secreted. Inhibits selectively tetrodotoxin-sensitive voltage-gated sodium channels (Nav). Does not act by binding to receptor site 3 to slow the inactivation kinetics of sodium currents. This Cyriopagopus hainanus (Chinese bird spider) protein is Mu-theraphotoxin-Hhn1a.